The following is a 96-amino-acid chain: Small ribosomal subunit protein uS17 (96 aa).

It belongs to the universal ribosomal protein uS17 family. Part of the 30S ribosomal subunit.

Its function is as follows. One of the primary rRNA binding proteins, it binds specifically to the 5'-end of 16S ribosomal RNA. The polypeptide is Small ribosomal subunit protein uS17 (Deinococcus radiodurans (strain ATCC 13939 / DSM 20539 / JCM 16871 / CCUG 27074 / LMG 4051 / NBRC 15346 / NCIMB 9279 / VKM B-1422 / R1)).